We begin with the raw amino-acid sequence, 1433 residues long: DNA polymerase III PolC-type (1433 aa).

The Exonuclease domain occupies 419 to 575 (FVVFDVETTG…YDAEATGHLL (157 aa)).

Belongs to the DNA polymerase type-C family. PolC subfamily.

The protein resides in the cytoplasm. The catalysed reaction is DNA(n) + a 2'-deoxyribonucleoside 5'-triphosphate = DNA(n+1) + diphosphate. Its function is as follows. Required for replicative DNA synthesis. This DNA polymerase also exhibits 3' to 5' exonuclease activity. The sequence is that of DNA polymerase III PolC-type from Halalkalibacterium halodurans (strain ATCC BAA-125 / DSM 18197 / FERM 7344 / JCM 9153 / C-125) (Bacillus halodurans).